We begin with the raw amino-acid sequence, 78 residues long: UPF0335 protein RP113 (78 aa).

This sequence belongs to the UPF0335 family.

The chain is UPF0335 protein RP113 from Rickettsia prowazekii (strain Madrid E).